Reading from the N-terminus, the 125-residue chain is Large ribosomal subunit protein bL12 (125 aa).

The protein belongs to the bacterial ribosomal protein bL12 family. Homodimer. Part of the ribosomal stalk of the 50S ribosomal subunit. Forms a multimeric L10(L12)X complex, where L10 forms an elongated spine to which 2 to 4 L12 dimers bind in a sequential fashion. Binds GTP-bound translation factors.

In terms of biological role, forms part of the ribosomal stalk which helps the ribosome interact with GTP-bound translation factors. Is thus essential for accurate translation. The protein is Large ribosomal subunit protein bL12 of Helicobacter acinonychis (strain Sheeba).